A 353-amino-acid chain; its full sequence is Phospho-furanose lactonase (353 aa).

Zn(2+) contacts are provided by His-25, His-27, Lys-153, His-186, and His-214. Lys-153 is modified (N6-carboxylysine). 244–245 is a binding site for substrate; it reads KY. Asp-272 lines the Zn(2+) pocket. Residue 275–278 participates in substrate binding; it reads RILY.

Belongs to the metallo-dependent hydrolases superfamily. Phosphotriesterase family. It depends on Zn(2+) as a cofactor.

The enzyme catalyses a 1,4-lactone + H2O = a 4-hydroxyacid + H(+). It catalyses the reaction D-xylono-1,4-lactone 5-phosphate + H2O = 5-phospho-D-xylonate + H(+). It carries out the reaction L-arabino-1,4-lactone 5-phosphate + H2O = 5-phospho-L-arabinonate + H(+). Catalyzes the hydrolysis of D-xylono-1,4-lactone-5-phosphate and L-arabino-1,4-lactone-5-phosphate. Also able to hydrolyze carboxy 1,4-lactones. The polypeptide is Phospho-furanose lactonase (Mycoplasmopsis agalactiae (strain NCTC 10123 / CIP 59.7 / PG2) (Mycoplasma agalactiae)).